We begin with the raw amino-acid sequence, 508 residues long: Steroid 17-alpha-hydroxylase/17,20 lyase (508 aa).

N202 contacts substrate. C442 is a binding site for heme.

This sequence belongs to the cytochrome P450 family. Heme is required as a cofactor.

It localises to the endoplasmic reticulum membrane. Its subcellular location is the microsome membrane. The enzyme catalyses a C21-steroid + reduced [NADPH--hemoprotein reductase] + O2 = a 17alpha-hydroxy-C21-steroid + oxidized [NADPH--hemoprotein reductase] + H2O + H(+). The catalysed reaction is progesterone + reduced [NADPH--hemoprotein reductase] + O2 = 17alpha-hydroxyprogesterone + oxidized [NADPH--hemoprotein reductase] + H2O + H(+). It catalyses the reaction pregnenolone + reduced [NADPH--hemoprotein reductase] + O2 = 17alpha-hydroxypregnenolone + oxidized [NADPH--hemoprotein reductase] + H2O + H(+). It carries out the reaction 17alpha-hydroxyprogesterone + reduced [NADPH--hemoprotein reductase] + O2 = androst-4-ene-3,17-dione + acetate + oxidized [NADPH--hemoprotein reductase] + H2O + 2 H(+). The enzyme catalyses 17alpha-hydroxyprogesterone + reduced [NADPH--hemoprotein reductase] + O2 = 16alpha,17alpha-dihydroxyprogesterone + oxidized [NADPH--hemoprotein reductase] + H2O + H(+). The catalysed reaction is 16alpha,17alpha-dihydroxyprogesterone + reduced [NADPH--hemoprotein reductase] + O2 = 6beta,16alpha,17alpha-trihydroxyprogesterone + oxidized [NADPH--hemoprotein reductase] + H2O + H(+). It catalyses the reaction 17alpha-hydroxypregnenolone + reduced [NADPH--hemoprotein reductase] + O2 = 3beta-hydroxyandrost-5-en-17-one + acetate + oxidized [NADPH--hemoprotein reductase] + H2O + 2 H(+). It carries out the reaction 16alpha,17alpha-dihydroxypregnenolone + reduced [NADPH--hemoprotein reductase] + O2 = 3beta,16alpha-dihydroxy-androst-5-en-17-one + acetate + oxidized [NADPH--hemoprotein reductase] + H2O + 2 H(+). The enzyme catalyses 3beta-hydroxyandrost-5-en-17-one + reduced [NADPH--hemoprotein reductase] + O2 = 3beta,16alpha-dihydroxy-androst-5-en-17-one + oxidized [NADPH--hemoprotein reductase] + H2O + H(+). The catalysed reaction is androst-4-ene-3,17-dione + reduced [NADPH--hemoprotein reductase] + O2 = 16alpha-hydroxyandrost-4-ene-3,17-dione + oxidized [NADPH--hemoprotein reductase] + H2O + H(+). It participates in steroid hormone biosynthesis. The protein operates within steroid biosynthesis; glucocorticoid biosynthesis. Its activity is regulated as follows. Regulated predominantly by intracellular cAMP levels. The 17,20-lyase activity is stimulated by cytochrome b5, which acts as an allosteric effector increasing the Vmax of the lyase activity. In terms of biological role, a cytochrome P450 monooxygenase involved in corticoid and androgen biosynthesis. Catalyzes 17-alpha hydroxylation of C21 steroids, which is common for both pathways. A second oxidative step, required only for androgen synthesis, involves an acyl-carbon cleavage. The 17-alpha hydroxy intermediates, as part of adrenal glucocorticoids biosynthesis pathway, are precursors of cortisol. Hydroxylates steroid hormones, pregnenolone and progesterone to form 17-alpha hydroxy metabolites, followed by the cleavage of the C17-C20 bond to form C19 steroids, dehydroepiandrosterone (DHEA) and androstenedione. Has 16-alpha hydroxylase activity. Catalyzes 16-alpha hydroxylation of 17-alpha hydroxy pregnenolone, followed by the cleavage of the C17-C20 bond to form 16-alpha-hydroxy DHEA. Also 16-alpha hydroxylates androgens, relevant for estriol synthesis. Mechanistically, uses molecular oxygen inserting one oxygen atom into a substrate, and reducing the second into a water molecule, with two electrons provided by NADPH via cytochrome P450 reductase (CPR; NADPH-ferrihemoprotein reductase). The polypeptide is Steroid 17-alpha-hydroxylase/17,20 lyase (CYP17A1) (Pan troglodytes (Chimpanzee)).